Consider the following 144-residue polypeptide: uncharacterized protein (144 aa).

A run of 2 helical transmembrane segments spans residues 76-96 and 105-125; these read LLSA…VTML and ILRA…VKSY.

The protein belongs to the RseC family.

The protein resides in the cell inner membrane. This is an uncharacterized protein from Haemophilus influenzae (strain ATCC 51907 / DSM 11121 / KW20 / Rd).